The following is a 723-amino-acid chain: Catalase-peroxidase (723 aa).

Residues 1-29 (MDGNDLVENKCPVMHGGITVAGHSNTAWW) form the signal peptide. The tryptophyl-tyrosyl-methioninium (Trp-Tyr) (with M-251) cross-link spans 97–225 (WHSAGSYRLA…LAAVQMGLIY (129 aa)). The active-site Proton acceptor is the His-98. The segment at residues 225 to 251 (YVNPEGVNGKSDPLKSAAQVRETFARM) is a cross-link (tryptophyl-tyrosyl-methioninium (Tyr-Met) (with W-97)). His-266 lines the heme b pocket.

Belongs to the peroxidase family. Peroxidase/catalase subfamily. As to quaternary structure, homodimer or homotetramer. The cofactor is heme b. Formation of the three residue Trp-Tyr-Met cross-link is important for the catalase, but not the peroxidase activity of the enzyme.

It carries out the reaction H2O2 + AH2 = A + 2 H2O. The catalysed reaction is 2 H2O2 = O2 + 2 H2O. Functionally, bifunctional enzyme with both catalase and broad-spectrum peroxidase activity. The chain is Catalase-peroxidase from Hyphomonas neptunium (strain ATCC 15444).